A 449-amino-acid chain; its full sequence is Required for meiotic nuclear division protein 1 homolog (449 aa).

The N-terminal 12 residues, methionine 1–serine 12, are a transit peptide targeting the mitochondrion.

The protein belongs to the RMD1/sif2 family. In terms of assembly, homooligomer.

It localises to the mitochondrion. Functionally, required for mitochondrial translation, possibly by coordinating the assembly or maintenance of the mitochondrial ribosome. The chain is Required for meiotic nuclear division protein 1 homolog (RMND1) from Homo sapiens (Human).